The sequence spans 402 residues: MAQDRKKVLVLGAGYAGLQTITKLQKQISADEAEVTLINKNDYHYEATWLHEASAGTISYEDLLYPVESVVNKDKVNFVKAEVTKIDRNAKKVETDAGIFDFDILVVSLGFESETFGIKGMKDYAFQIENVLTARKLSRHIEDKFANYASSKQKDDKDLAIIVGGAGFTGVEFLGELTDRIPELCNKYGVEQSKVKITCVEAAPKMLPMFSDELVNHAVNYLENKGVEFKIGTPIVAANEKGFVVKVNDEEQQLEANTVVWAAGVRGSKLMEESFEGVKRGRIVTKQDLTIEGYDDIFVIGDCSAFIPAGEERPLPTTAQIATQQGEHTAKNVKNILEGQPTNEFEYVDRGTVCSLGAHDGVGVVYGRDIQGKKAAFMKKVIDTRAVFKLGGIGLAFKKGKF.

FAD contacts are provided by residues 12–16 (GAGYA), 39–40 (NK), and V83. Residue E172 is part of the active site. FAD is bound by residues D302, 319-320 (AQ), and K379.

Belongs to the NADH dehydrogenase family. FAD serves as cofactor.

The protein resides in the cell membrane. It carries out the reaction a quinone + NADH + H(+) = a quinol + NAD(+). Alternative, nonproton pumping NADH:quinone oxidoreductase that delivers electrons to the respiratory chain by oxidation of NADH and reduction of quinones, and contributes to the regeneration of NAD(+). This Staphylococcus saprophyticus subsp. saprophyticus (strain ATCC 15305 / DSM 20229 / NCIMB 8711 / NCTC 7292 / S-41) protein is Type II NADH:quinone oxidoreductase.